The primary structure comprises 473 residues: Histidinol dehydrogenase, chloroplastic (473 aa).

Residues 1–28 (MSLRPGRAHPLAASPLHTPLPARPRPQL) are disordered. Positions 162, 224, and 247 each coordinate NAD(+). Substrate is bound by residues Ser-273, Gln-295, and His-298. Residues Gln-295 and His-298 each contribute to the Zn(2+) site. Catalysis depends on proton acceptor residues Glu-363 and His-364. The substrate site is built by His-364, Asp-397, Glu-451, and His-456. Asp-397 serves as a coordination point for Zn(2+). A Zn(2+)-binding site is contributed by His-456.

It belongs to the histidinol dehydrogenase family. Zn(2+) serves as cofactor.

It localises to the plastid. The protein resides in the chloroplast. The catalysed reaction is L-histidinol + 2 NAD(+) + H2O = L-histidine + 2 NADH + 3 H(+). It participates in amino-acid biosynthesis; L-histidine biosynthesis; L-histidine from 5-phospho-alpha-D-ribose 1-diphosphate: step 9/9. In terms of biological role, catalyzes the sequential NAD-dependent oxidations of L-histidinol to L-histidinaldehyde and then to L-histidine. The polypeptide is Histidinol dehydrogenase, chloroplastic (HDH) (Oryza sativa subsp. japonica (Rice)).